A 166-amino-acid polypeptide reads, in one-letter code: Phosphopantetheine adenylyltransferase (166 aa).

S11 lines the substrate pocket. Residues 11–12 (SF) and H19 contribute to the ATP site. Substrate-binding residues include K43, A76, and R90. Residues 91–93 (GLR), E101, and 126–132 (YRYFSSS) each bind ATP.

This sequence belongs to the bacterial CoaD family. In terms of assembly, homohexamer. Mg(2+) is required as a cofactor.

It localises to the cytoplasm. The enzyme catalyses (R)-4'-phosphopantetheine + ATP + H(+) = 3'-dephospho-CoA + diphosphate. The protein operates within cofactor biosynthesis; coenzyme A biosynthesis; CoA from (R)-pantothenate: step 4/5. In terms of biological role, reversibly transfers an adenylyl group from ATP to 4'-phosphopantetheine, yielding dephospho-CoA (dPCoA) and pyrophosphate. The sequence is that of Phosphopantetheine adenylyltransferase from Streptococcus mutans serotype c (strain ATCC 700610 / UA159).